The chain runs to 410 residues: 2-oxoisovalerate dehydrogenase subunit alpha (410 aa).

It belongs to the BCKDHA family. As to quaternary structure, heterodimer of an alpha and a beta chain. Requires thiamine diphosphate as cofactor.

The catalysed reaction is N(6)-[(R)-lipoyl]-L-lysyl-[protein] + 3-methyl-2-oxobutanoate + H(+) = N(6)-[(R)-S(8)-2-methylpropanoyldihydrolipoyl]-L-lysyl-[protein] + CO2. The branched-chain alpha-keto dehydrogenase complex catalyzes the overall conversion of alpha-keto acids to acyl-CoA and CO(2). It contains multiple copies of three enzymatic components: branched-chain alpha-keto acid decarboxylase (E1), lipoamide acyltransferase (E2) and lipoamide dehydrogenase (E3). In Pseudomonas aeruginosa (strain ATCC 15692 / DSM 22644 / CIP 104116 / JCM 14847 / LMG 12228 / 1C / PRS 101 / PAO1), this protein is 2-oxoisovalerate dehydrogenase subunit alpha (bkdA1).